The chain runs to 202 residues: Probable adenylyl-sulfate kinase (202 aa).

36 to 43 is an ATP binding site; it reads GLSGSGKS. Ser-110 serves as the catalytic Phosphoserine intermediate.

It belongs to the APS kinase family.

The catalysed reaction is adenosine 5'-phosphosulfate + ATP = 3'-phosphoadenylyl sulfate + ADP + H(+). The protein operates within sulfur metabolism; hydrogen sulfide biosynthesis; sulfite from sulfate: step 2/3. In terms of biological role, catalyzes the synthesis of activated sulfate. The polypeptide is Probable adenylyl-sulfate kinase (Halalkalibacterium halodurans (strain ATCC BAA-125 / DSM 18197 / FERM 7344 / JCM 9153 / C-125) (Bacillus halodurans)).